We begin with the raw amino-acid sequence, 164 residues long: HTH-type transcriptional regulator IscR (164 aa).

The HTH rrf2-type domain occupies Arg-2–Asn-131. A DNA-binding region (H-T-H motif) is located at residues Leu-28–Lys-51. 3 residues coordinate [2Fe-2S] cluster: Cys-92, Cys-98, and Cys-104.

[2Fe-2S] cluster serves as cofactor.

Functionally, regulates the transcription of several operons and genes involved in the biogenesis of Fe-S clusters and Fe-S-containing proteins. This chain is HTH-type transcriptional regulator IscR, found in Pectobacterium atrosepticum (strain SCRI 1043 / ATCC BAA-672) (Erwinia carotovora subsp. atroseptica).